The following is a 428-amino-acid chain: Putative heme-binding peroxidase (428 aa).

A disordered region spans residues 1 to 33 (MTAIQKPVVAKREAPKAEVNPTVSRSTQTETIK). Residues 21–32 (PTVSRSTQTETI) are compositionally biased toward polar residues. Histidine 188 serves as the catalytic Proton acceptor. Histidine 312 is a binding site for heme b. Tryptophan 328 (tryptophan radical intermediate) is an active-site residue.

It belongs to the peroxidase family. Cytochrome c peroxidase subfamily. Heme b serves as cofactor.

In terms of biological role, destroys radicals which are normally produced within the cells and which are toxic to biological systems. This chain is Putative heme-binding peroxidase, found in Debaryomyces hansenii (strain ATCC 36239 / CBS 767 / BCRC 21394 / JCM 1990 / NBRC 0083 / IGC 2968) (Yeast).